The chain runs to 438 residues: uncharacterized protein (438 aa).

The first 32 residues, 1 to 32 (MARPLLGKTSSVRRRLESLSACSIFFFLRKFC), serve as a signal peptide directing secretion.

This is an uncharacterized protein from Frog virus 3 (isolate Goorha) (FV-3).